We begin with the raw amino-acid sequence, 485 residues long: D-alanine--D-alanyl carrier protein ligase (485 aa).

ATP is bound at residue 144 to 145; sequence TS. Aspartate 189 contributes to the D-alanine binding site. 284–289 provides a ligand contact to ATP; it reads NTYGPT. Valine 293 lines the D-alanine pocket. ATP contacts are provided by aspartate 365 and lysine 473. A D-alanine-binding site is contributed by lysine 473.

The protein belongs to the ATP-dependent AMP-binding enzyme family. DltA subfamily.

The protein resides in the cytoplasm. It carries out the reaction holo-[D-alanyl-carrier protein] + D-alanine + ATP = D-alanyl-[D-alanyl-carrier protein] + AMP + diphosphate. It participates in cell wall biogenesis; lipoteichoic acid biosynthesis. Functionally, catalyzes the first step in the D-alanylation of lipoteichoic acid (LTA), the activation of D-alanine and its transfer onto the D-alanyl carrier protein (Dcp) DltC. In an ATP-dependent two-step reaction, forms a high energy D-alanyl-AMP intermediate, followed by transfer of the D-alanyl residue as a thiol ester to the phosphopantheinyl prosthetic group of the Dcp. D-alanylation of LTA plays an important role in modulating the properties of the cell wall in Gram-positive bacteria, influencing the net charge of the cell wall. The sequence is that of D-alanine--D-alanyl carrier protein ligase from Staphylococcus haemolyticus (strain JCSC1435).